Reading from the N-terminus, the 221-residue chain is Proteasome subunit beta type-1 (221 aa).

Belongs to the peptidase T1B family. The 26S proteasome consists of a 20S proteasome core and two 19S regulatory subunits. The 20S proteasome core is composed of 28 subunits that are arranged in four stacked rings, resulting in a barrel-shaped structure. The two end rings are each formed by seven alpha subunits, and the two central rings are each formed by seven beta subunits. The catalytic chamber with the active sites is on the inside of the barrel.

The protein resides in the cytoplasm. It localises to the nucleus. Its function is as follows. Non-catalytic component of the proteasome, a multicatalytic proteinase complex which is characterized by its ability to cleave peptides with Arg, Phe, Tyr, Leu, and Glu adjacent to the leaving group at neutral or slightly basic pH. The proteasome has an ATP-dependent proteolytic activity. The polypeptide is Proteasome subunit beta type-1 (PBF1) (Oryza sativa subsp. japonica (Rice)).